Here is a 61-residue protein sequence, read N- to C-terminus: Small ribosomal subunit protein uS14 (61 aa).

Cysteine 24, cysteine 27, cysteine 40, and cysteine 43 together coordinate Zn(2+).

The protein belongs to the universal ribosomal protein uS14 family. Zinc-binding uS14 subfamily. As to quaternary structure, part of the 30S ribosomal subunit. Contacts proteins S3 and S10. It depends on Zn(2+) as a cofactor.

Binds 16S rRNA, required for the assembly of 30S particles and may also be responsible for determining the conformation of the 16S rRNA at the A site. In Geobacillus stearothermophilus (Bacillus stearothermophilus), this protein is Small ribosomal subunit protein uS14.